The chain runs to 511 residues: Glucose-6-phosphate 1-dehydrogenase, cytoplasmic isoform (511 aa).

NADP(+) is bound by residues 36–43 (GASGDLAK), Arg-71, Tyr-151, and Lys-178. Residues Lys-178, 208-212 (HYLGK), Glu-246, and Asp-265 each bind D-glucose 6-phosphate. Catalysis depends on His-270, which acts as the Proton acceptor. Lys-353 is an NADP(+) binding site. The D-glucose 6-phosphate site is built by Lys-356 and Arg-361. Residues Lys-362, Arg-366, and Arg-390 each contribute to the NADP(+) site. Gln-392 contacts D-glucose 6-phosphate. Residues 398-400 (YMK), 418-420 (DLS), Arg-484, and Trp-506 each bind NADP(+).

The protein belongs to the glucose-6-phosphate dehydrogenase family. In terms of assembly, homotetramer. As to expression, found in tubers, stolons, roots, and flower buds.

The protein resides in the cytoplasm. It carries out the reaction D-glucose 6-phosphate + NADP(+) = 6-phospho-D-glucono-1,5-lactone + NADPH + H(+). Its pathway is carbohydrate degradation; pentose phosphate pathway; D-ribulose 5-phosphate from D-glucose 6-phosphate (oxidative stage): step 1/3. With respect to regulation, regulated by metabolites. In terms of biological role, catalyzes the rate-limiting step of the oxidative pentose-phosphate pathway, which represents a route for the dissimilation of carbohydrates besides glycolysis. The main function of this enzyme is to generate NADPH for reductive biosyntheses. This chain is Glucose-6-phosphate 1-dehydrogenase, cytoplasmic isoform (G6PDH), found in Solanum tuberosum (Potato).